The sequence spans 309 residues: Homoserine kinase (309 aa).

An ATP-binding site is contributed by 91–101; it reads PIGSGLGSSAC.

The protein belongs to the GHMP kinase family. Homoserine kinase subfamily.

Its subcellular location is the cytoplasm. It catalyses the reaction L-homoserine + ATP = O-phospho-L-homoserine + ADP + H(+). The protein operates within amino-acid biosynthesis; L-threonine biosynthesis; L-threonine from L-aspartate: step 4/5. Catalyzes the ATP-dependent phosphorylation of L-homoserine to L-homoserine phosphate. This chain is Homoserine kinase, found in Klebsiella pneumoniae (strain 342).